A 435-amino-acid polypeptide reads, in one-letter code: Chromatin structure-remodeling complex subunit RSC7 (435 aa).

Residues 1 to 97 (MSDSEGGLAS…DKGVTRSRNR (97 aa)) form a disordered region. The span at 30 to 66 (DTEDLDIDENDENEDDDYREEEANEGVNEEEISDEEE) shows a compositional bias: acidic residues. Ser86 is subject to Phosphoserine. A functional region; able to complement all NPL6 null allele phenotypes region spans residues 248–435 (ELRTKGNVIE…QNFEKCNEYI (188 aa)).

This sequence belongs to the RSC7/SWP82 family. RSC7 subfamily. As to quaternary structure, interacts with ARP7, ARP9, RSC3, RSC8, RSC30 and STH1. Component of the two forms of the RSC complex composed of at least either RSC1 or RSC2, and ARP7, ARP9, LDB7, NPL6, RSC3, RSC30, RSC4, RSC58, RSC6, RSC8, RSC9, SFH1, STH1, HTL1 and probably RTT102. The complexes interact with histone and histone variant components of centromeric chromatin. Component of a fungal-specific module (HTL1-LDB7-NPL6-RSC3-RSC30) within the RSC complex.

Its subcellular location is the nucleus. Functionally, component of the chromatin structure remodeling complex (RSC), which is involved in transcription regulation and nucleosome positioning. RSC is responsible for the transfer of a histone octamer from a nucleosome core particle to naked DNA. The reaction requires ATP and involves an activated RSC-nucleosome intermediate. Remodeling reaction also involves DNA translocation, DNA twist and conformational change. As a reconfigurer of centromeric and flanking nucleosomes, RSC complex is required both for proper kinetochore function in chromosome segregation and, via a PKC1-dependent signaling pathway, for organization of the cellular cytoskeleton. Together with HTL1, LDB7, RSC3, RSC30 components, defines a fungal-specific module within the RSC complex that plays a role in many cellular functions including the maintenance of cell wall integrity. Acidic protein important for nuclear protein localization. The sequence is that of Chromatin structure-remodeling complex subunit RSC7 (NPL6) from Saccharomyces cerevisiae (strain ATCC 204508 / S288c) (Baker's yeast).